An 85-amino-acid chain; its full sequence is Large ribosomal subunit protein bL27 (85 aa).

It belongs to the bacterial ribosomal protein bL27 family.

The polypeptide is Large ribosomal subunit protein bL27 (Cellvibrio japonicus (strain Ueda107) (Pseudomonas fluorescens subsp. cellulosa)).